The sequence spans 501 residues: Lysine--tRNA ligase (501 aa).

The Mg(2+) site is built by Glu-410 and Glu-417.

This sequence belongs to the class-II aminoacyl-tRNA synthetase family. In terms of assembly, homodimer. Mg(2+) serves as cofactor.

The protein localises to the cytoplasm. It carries out the reaction tRNA(Lys) + L-lysine + ATP = L-lysyl-tRNA(Lys) + AMP + diphosphate. In Shewanella halifaxensis (strain HAW-EB4), this protein is Lysine--tRNA ligase.